Consider the following 467-residue polypeptide: Matrix metalloproteinase-18 (467 aa).

An N-terminal signal peptide occupies residues 1–17 (MNSLLLKLLLCVAITAA). A propeptide spanning residues 18 to 99 (FPADKQDEPP…PRCGVYDVGQ (82 aa)) is cleaved from the precursor. A Cysteine switch motif is present at residues 90–97 (PRCGVYDV). Residues Cys-92 and His-218 each contribute to the Zn(2+) site. Residue Glu-219 is part of the active site. 2 residues coordinate Zn(2+): His-222 and His-228. Hemopexin repeat units lie at residues 277–326 (PSRC…WPSL), 327–373 (PTNI…GFPK), 375–423 (VKRI…FPGI), and 424–467 (PDKI…WLGC). Cys-280 and Cys-467 are oxidised to a cystine.

This sequence belongs to the peptidase M10A family. The cofactor is Zn(2+). It depends on Ca(2+) as a cofactor. As to expression, expressed only transiently in whole animal, at time when tadpole feeding begins.

It localises to the secreted. Its subcellular location is the extracellular space. The protein resides in the extracellular matrix. Up-regulated in the tail by thyroid hormone. In terms of biological role, cleaves collagen type I. May play a role in larval tissue degeneration and adult organogenesis during amphibian metamorphosis. May be involved in tail resorption. In Xenopus laevis (African clawed frog), this protein is Matrix metalloproteinase-18 (mmp18).